The sequence spans 270 residues: ATP synthase subunit a (270 aa).

5 helical membrane-spanning segments follow: residues 37 to 57 (NVHIDSLFFSVLTGMLFLWVF), 98 to 118 (VAPLALTIFCWVILMNLMDLI), 143 to 163 (DVNITMAMALGVFALMIYYSI), 217 to 237 (VVFILIAAMLPWYLQWVGALP), and 239 to 259 (AIFHILVILIQAFVFMMLTIV).

Belongs to the ATPase A chain family. F-type ATPases have 2 components, CF(1) - the catalytic core - and CF(0) - the membrane proton channel. CF(1) has five subunits: alpha(3), beta(3), gamma(1), delta(1), epsilon(1). CF(0) has three main subunits: a(1), b(2) and c(9-12). The alpha and beta chains form an alternating ring which encloses part of the gamma chain. CF(1) is attached to CF(0) by a central stalk formed by the gamma and epsilon chains, while a peripheral stalk is formed by the delta and b chains.

The protein localises to the cell inner membrane. Key component of the proton channel; it plays a direct role in the translocation of protons across the membrane. This Aliivibrio salmonicida (strain LFI1238) (Vibrio salmonicida (strain LFI1238)) protein is ATP synthase subunit a.